The primary structure comprises 207 residues: Peptidyl-tRNA hydrolase (207 aa).

Y19 serves as a coordination point for tRNA. The Proton acceptor role is filled by H24. The tRNA site is built by F70, N72, and N118.

Belongs to the PTH family. Monomer.

It localises to the cytoplasm. The catalysed reaction is an N-acyl-L-alpha-aminoacyl-tRNA + H2O = an N-acyl-L-amino acid + a tRNA + H(+). In terms of biological role, hydrolyzes ribosome-free peptidyl-tRNAs (with 1 or more amino acids incorporated), which drop off the ribosome during protein synthesis, or as a result of ribosome stalling. Its function is as follows. Catalyzes the release of premature peptidyl moieties from peptidyl-tRNA molecules trapped in stalled 50S ribosomal subunits, and thus maintains levels of free tRNAs and 50S ribosomes. This chain is Peptidyl-tRNA hydrolase, found in Synechococcus sp. (strain CC9311).